A 196-amino-acid chain; its full sequence is DnaA initiator-associating protein DiaA (196 aa).

Positions 34-196 constitute an SIS domain; the sequence is MVQSLLNGNK…DNTLFPHQND (163 aa).

This sequence belongs to the SIS family. DiaA subfamily. Homotetramer; dimer of dimers.

In terms of biological role, required for the timely initiation of chromosomal replication via direct interactions with the DnaA initiator protein. In Pectobacterium carotovorum subsp. carotovorum (strain PC1), this protein is DnaA initiator-associating protein DiaA.